Here is a 103-residue protein sequence, read N- to C-terminus: Small ribosomal subunit protein uS10 (103 aa).

It belongs to the universal ribosomal protein uS10 family. In terms of assembly, part of the 30S ribosomal subunit.

Involved in the binding of tRNA to the ribosomes. This is Small ribosomal subunit protein uS10 from Idiomarina loihiensis (strain ATCC BAA-735 / DSM 15497 / L2-TR).